Consider the following 102-residue polypeptide: Protamine-2 (102 aa).

2 disordered regions span residues 1–40 (MVRYRVRSPSEPSHEVYRQQLHGQEQGHHGQEEQGLSPEH) and 67–102 (HRQQHRSCRRRKRRSCRHRRKHRRGCRTRRRTCRRH). Residues S8, S10, and S37 each carry the phosphoserine modification.

It belongs to the protamine P2 family. Interacts with TDRP. Proteolytic processing into mature chains is required for histone eviction during spermatogenesis. Transition proteins (TNP1 and TNP2) are required for processing. As to expression, testis.

The protein resides in the nucleus. Its subcellular location is the chromosome. Its function is as follows. Protamines substitute for histones in the chromatin of sperm during the haploid phase of spermatogenesis. They compact sperm DNA into a highly condensed, stable and inactive complex. This is Protamine-2 (PRM2) from Pan troglodytes (Chimpanzee).